The primary structure comprises 224 residues: Germin-like protein 8-10 (224 aa).

An N-terminal signal peptide occupies residues 1–22; that stretch reads MASPSICLLAALLALVSWQAIA. A disulfide bridge connects residues Cys-32 and Cys-47. One can recognise a Cupin type-1 domain in the interval 62–212; it reads AMLDTPRKTN…AFQVEKGTID (151 aa). N-linked (GlcNAc...) asparagine glycosylation occurs at Asn-76. Residues His-109, His-111, and Glu-116 each coordinate Mn(2+). Residue Asn-135 is glycosylated (N-linked (GlcNAc...) asparagine). His-157 is a binding site for Mn(2+).

It belongs to the germin family. In terms of assembly, oligomer (believed to be a pentamer but probably hexamer).

Its subcellular location is the secreted. It is found in the extracellular space. The protein localises to the apoplast. In terms of biological role, plays a role in broad-spectrum disease resistance. Probably has no oxalate oxidase activity even if the active site is conserved. This is Germin-like protein 8-10 (GLP2) from Oryza sativa subsp. japonica (Rice).